A 607-amino-acid chain; its full sequence is tRNA uridine 5-carboxymethylaminomethyl modification enzyme MnmG (607 aa).

FAD contacts are provided by residues 11-16 (GGGHAG), Val123, and Ser178. 270–284 (GPRYCPSVEDKIVRF) provides a ligand contact to NAD(+). Residue Gln367 participates in FAD binding.

Belongs to the MnmG family. As to quaternary structure, homodimer. Heterotetramer of two MnmE and two MnmG subunits. It depends on FAD as a cofactor.

The protein localises to the cytoplasm. Its function is as follows. NAD-binding protein involved in the addition of a carboxymethylaminomethyl (cmnm) group at the wobble position (U34) of certain tRNAs, forming tRNA-cmnm(5)s(2)U34. The sequence is that of tRNA uridine 5-carboxymethylaminomethyl modification enzyme MnmG from Metamycoplasma arthritidis (strain 158L3-1) (Mycoplasma arthritidis).